Reading from the N-terminus, the 230-residue chain is Heptaprenylglyceryl phosphate synthase (230 aa).

Lys12 contributes to the sn-glycerol 1-phosphate binding site. Residues Asp14 and Thr40 each coordinate Mg(2+). Sn-glycerol 1-phosphate contacts are provided by residues 159 to 164 (YIEYSG), Gly189, and 209 to 210 (GD).

The protein belongs to the GGGP/HepGP synthase family. Group I subfamily. As to quaternary structure, homodimer. It depends on Mg(2+) as a cofactor.

It carries out the reaction sn-glycerol 1-phosphate + all-trans-heptaprenyl diphosphate = 3-heptaprenyl-sn-glycero-1-phosphate + diphosphate. The protein operates within membrane lipid metabolism; glycerophospholipid metabolism. Functionally, prenyltransferase that catalyzes in vivo the transfer of the heptaprenyl moiety of heptaprenyl pyrophosphate (HepPP; 35 carbon atoms) to the C3 hydroxyl of sn-glycerol-1-phosphate (G1P), producing heptaprenylglyceryl phosphate (HepGP). This reaction is an ether-bond-formation step in the biosynthesis of archaea-type G1P-based membrane lipids found in Bacillales. This is Heptaprenylglyceryl phosphate synthase from Staphylococcus aureus (strain Mu3 / ATCC 700698).